The primary structure comprises 559 residues: Glucose-6-phosphate isomerase (559 aa).

E352 serves as the catalytic Proton donor. Catalysis depends on residues H383 and K511.

The protein belongs to the GPI family.

The protein resides in the cytoplasm. It carries out the reaction alpha-D-glucose 6-phosphate = beta-D-fructose 6-phosphate. It functions in the pathway carbohydrate biosynthesis; gluconeogenesis. Its pathway is carbohydrate degradation; glycolysis; D-glyceraldehyde 3-phosphate and glycerone phosphate from D-glucose: step 2/4. Its function is as follows. Catalyzes the reversible isomerization of glucose-6-phosphate to fructose-6-phosphate. This Chlorobium phaeobacteroides (strain DSM 266 / SMG 266 / 2430) protein is Glucose-6-phosphate isomerase.